A 513-amino-acid chain; its full sequence is Putative thymidine phosphorylase (513 aa).

This sequence belongs to the thymidine/pyrimidine-nucleoside phosphorylase family. Type 2 subfamily.

It carries out the reaction thymidine + phosphate = 2-deoxy-alpha-D-ribose 1-phosphate + thymine. This is Putative thymidine phosphorylase from Rhodopseudomonas palustris (strain BisA53).